We begin with the raw amino-acid sequence, 806 residues long: Lysine-specific demethylase JMJ15 (806 aa).

The tract at residues 1-43 (MEPFSAAQNKEDKDTSVEPPRRRCHRKNKGTNVEPPSSPYHPK) is disordered. The span at 9-21 (NKEDKDTSVEPPR) shows a compositional bias: basic and acidic residues. One can recognise a JmjN domain in the interval 61-102 (APVFHPTSEEFEDTLAYIEKIRPLAESFGICRIVPPSNWSPP). The segment at 128–176 (NRGPVKKKTPKGRKRKRGKYSRTVAPKKRNGSVSKSVSTPKATEEENFG) is disordered. A compositionally biased stretch (basic residues) spans 131–157 (PVKKKTPKGRKRKRGKYSRTVAPKKRN). The Nuclear localization signal signature appears at 132-139 (VKKKTPKG). A compositionally biased stretch (polar residues) spans 158–168 (GSVSKSVSTPK). One can recognise a JmjC domain in the interval 261 to 427 (KYISSGWNLN…HGQNAVEIYS (167 aa)). 3 residues coordinate Fe cation: His-307, Glu-309, and His-395. Positions 514, 517, 528, 531, 539, 542, 545, and 547 each coordinate Zn(2+). The C5HC2 zinc finger occupies 514–566 (CISCFSDLHLSATGCKNCSSLEEYGCTKHDICSCEGKDRFIFLRYTIDELSSL). The FYR N-terminal domain occupies 629–687 (IMDLAAYHVEPINLGFLVVGKLWCNKHAIFPKGFKSRVKFYNVQDPMRISYYVSEIVDA). Residues 689–775 (LLGPLFKVTL…HGQVEYWNHK (87 aa)) enclose the FYR C-terminal domain.

The protein belongs to the JARID1 histone demethylase family. Fe(2+) is required as a cofactor. In terms of tissue distribution, expressed in roots, cotyledons, shoot apex, rosette and cauline leaves, stems, inflorescences and siliques. Expressed at low levels during vegetative growth but to higher levels in young floral organs.

The protein resides in the nucleus. It catalyses the reaction N(6),N(6),N(6)-trimethyl-L-lysyl(4)-[histone H3] + 2-oxoglutarate + O2 = N(6),N(6)-dimethyl-L-lysyl(4)-[histone H3] + formaldehyde + succinate + CO2. Histone demethylase that demethylates 'Lys-4' (H3K4me) of histone H3 with a specific activity for H3K4me3. No activity on H3K4me2, H3K4me1, H3K9me3/2, H3K27me3/2 and H3K36me3/2. Involved in the control of flowering time by demethylating H3K4me3 at the FLC locus and repressing its expression. The repression of FLC level and reduction in H3K4me3 at the FLC locus results in induction of the flowering activator FT, which is a downstream target of FLC. Promotes salt tolerance by down-regulating the expression of several transcriptions factors involved in stress responses via H3K4me3 and H3K4me2 demethylation. The chain is Lysine-specific demethylase JMJ15 from Arabidopsis thaliana (Mouse-ear cress).